A 538-amino-acid polypeptide reads, in one-letter code: T-complex protein 1 subunit epsilon (538 aa).

Belongs to the TCP-1 chaperonin family. As to quaternary structure, heterooligomeric complex of about 850 to 900 kDa that forms two stacked rings, 12 to 16 nm in diameter.

It localises to the cytoplasm. In terms of biological role, molecular chaperone; assists the folding of proteins upon ATP hydrolysis. Known to play a role, in vitro, in the folding of actin and tubulin. The sequence is that of T-complex protein 1 subunit epsilon (cct5) from Dictyostelium discoideum (Social amoeba).